The sequence spans 232 residues: Ribonuclease P protein component 3 (232 aa).

It belongs to the eukaryotic/archaeal RNase P protein component 3 family. As to quaternary structure, consists of a catalytic RNA component and at least 4-5 protein subunits.

The protein localises to the cytoplasm. It catalyses the reaction Endonucleolytic cleavage of RNA, removing 5'-extranucleotides from tRNA precursor.. Part of ribonuclease P, a protein complex that generates mature tRNA molecules by cleaving their 5'-ends. The polypeptide is Ribonuclease P protein component 3 (Methanococcus maripaludis (strain C6 / ATCC BAA-1332)).